A 339-amino-acid chain; its full sequence is Dihydroorotase (339 aa).

The Zn(2+) site is built by H12 and H14. Substrate-binding positions include 14-16 and N40; that span reads HVR. K94, H133, H167, and D239 together coordinate Zn(2+). K94 carries the post-translational modification N6-carboxylysine. A substrate-binding site is contributed by H133. The active site involves D239. The substrate site is built by H243 and A255.

Belongs to the metallo-dependent hydrolases superfamily. DHOase family. Class II DHOase subfamily. In terms of assembly, homodimer. Zn(2+) is required as a cofactor.

It carries out the reaction (S)-dihydroorotate + H2O = N-carbamoyl-L-aspartate + H(+). It participates in pyrimidine metabolism; UMP biosynthesis via de novo pathway; (S)-dihydroorotate from bicarbonate: step 3/3. In terms of biological role, catalyzes the reversible cyclization of carbamoyl aspartate to dihydroorotate. The chain is Dihydroorotase from Helicobacter pylori (strain G27).